Reading from the N-terminus, the 327-residue chain is MQQLTEIVEQALVIIDQASDLKALDDIRVDYLGKKGKITDMMKMMGSLSPEEKPAFGQAVNDAKQAIQQKLTERIDGLKSSELEAKLIAEKIDVTLPGRTQENGGLHPVTRTIERIETFFGELGFSVKQGPEIEDDFHNFDALNISEHHPARADHDTFYFNPKLMLRTQTSGVQIRTMETEKPPLRIISPGRVYRNDYDQTHTPMFHQVEGLLVDEHVNFAELKGILHDFLRNFFEEDLQVRFRPSYFPFTEPSAEVDVMGKNGKWLEVLGCGMVHPNVLRSVGIDPEKYSGFAFGMGVERLTMLRYGVNDLRAFFENDLRFLKQFK.

E252 contributes to the Mg(2+) binding site.

This sequence belongs to the class-II aminoacyl-tRNA synthetase family. Phe-tRNA synthetase alpha subunit type 1 subfamily. In terms of assembly, tetramer of two alpha and two beta subunits. Requires Mg(2+) as cofactor.

It localises to the cytoplasm. The catalysed reaction is tRNA(Phe) + L-phenylalanine + ATP = L-phenylalanyl-tRNA(Phe) + AMP + diphosphate + H(+). This is Phenylalanine--tRNA ligase alpha subunit from Shewanella putrefaciens (strain CN-32 / ATCC BAA-453).